The sequence spans 76 residues: Exodeoxyribonuclease 7 small subunit (76 aa).

It belongs to the XseB family. Heterooligomer composed of large and small subunits.

The protein localises to the cytoplasm. The catalysed reaction is Exonucleolytic cleavage in either 5'- to 3'- or 3'- to 5'-direction to yield nucleoside 5'-phosphates.. Functionally, bidirectionally degrades single-stranded DNA into large acid-insoluble oligonucleotides, which are then degraded further into small acid-soluble oligonucleotides. The polypeptide is Exodeoxyribonuclease 7 small subunit (Enterococcus faecalis (strain ATCC 700802 / V583)).